Here is a 330-residue protein sequence, read N- to C-terminus: Biotin synthase (330 aa).

The 230-residue stretch at 43-272 (FMGDKFDTCS…RAFLRFSGGR (230 aa)) folds into the Radical SAM core domain. Cysteine 61, cysteine 65, and cysteine 68 together coordinate [4Fe-4S] cluster. [2Fe-2S] cluster is bound by residues serine 105, cysteine 137, cysteine 197, and arginine 267.

It belongs to the radical SAM superfamily. Biotin synthase family. In terms of assembly, homodimer. The cofactor is [4Fe-4S] cluster. [2Fe-2S] cluster is required as a cofactor.

It carries out the reaction (4R,5S)-dethiobiotin + (sulfur carrier)-SH + 2 reduced [2Fe-2S]-[ferredoxin] + 2 S-adenosyl-L-methionine = (sulfur carrier)-H + biotin + 2 5'-deoxyadenosine + 2 L-methionine + 2 oxidized [2Fe-2S]-[ferredoxin]. It participates in cofactor biosynthesis; biotin biosynthesis; biotin from 7,8-diaminononanoate: step 2/2. In terms of biological role, catalyzes the conversion of dethiobiotin (DTB) to biotin by the insertion of a sulfur atom into dethiobiotin via a radical-based mechanism. The protein is Biotin synthase of Porphyromonas gingivalis (strain ATCC 33277 / DSM 20709 / CIP 103683 / JCM 12257 / NCTC 11834 / 2561).